The sequence spans 144 residues: Large ribosomal subunit protein uL15 (144 aa).

The segment at 1–45 (MNLNTLSPDPGSRPSRRRVGRGIGSGLGKTCGKGHKGQKSRAGGY) is disordered. A compositionally biased stretch (gly residues) spans 21–31 (RGIGSGLGKTC).

This sequence belongs to the universal ribosomal protein uL15 family. As to quaternary structure, part of the 50S ribosomal subunit.

Its function is as follows. Binds to the 23S rRNA. The polypeptide is Large ribosomal subunit protein uL15 (Legionella pneumophila (strain Corby)).